The sequence spans 556 residues: MAVFKLDALRAIDMSKLCFAISLLCAVAIATFLHKLYKARSFMRRLQREGMPMPPHHWLFGHIPVVAKIFGTLPPHAHLFFIADQVRQAYPHLDSAFYLDIWPFGPPSLMTISPELASQFTQDKSLPKYEGVRKFLKPLTGKKDLVSMEGHDWKHWRANFNPGFSASNITNMIPAMVQDVQTYRDIIRRHAVAGDIFPLELPTLAMSMDIIGRVVLDHEFNSQKAYNPLTSALIDQLAWCTIGVHSNPLEYINIARPIVHQYNAWRMNSYLDPLLKLRYETVNQRPKSKYVGDLIMSAYVKENSPDGRPTKMDPVFAEFMRAQVKLFLQAGHDTTAASIVYTFYMLQKHPESLRRLRKELDTVFGPDITATCDVLKEKPQLLSQCNFLLAVTKETLRLYPPTSTARFGLPGFYLTDSDGKRMPTENCLVVANHHGIHHNPRFWPRVEEFLPERWLVDESHPLYPVKNGWRPFERGSRNCLGQELAMTEIKLVVAIMIREFNIHDAYAENDLEKGQREKNLRVNGERAYQITRGGGHPSENFPCRVSLVANKEREIP.

A helical membrane pass occupies residues 17–37 (LCFAISLLCAVAIATFLHKLY). Cys-479 provides a ligand contact to heme.

This sequence belongs to the cytochrome P450 family. It depends on heme as a cofactor.

Its subcellular location is the membrane. The enzyme catalyses motiol + 3 reduced [NADPH--hemoprotein reductase] + 3 O2 = 4beta-carboxyl motiol + 3 oxidized [NADPH--hemoprotein reductase] + 4 H2O + 4 H(+). It participates in secondary metabolite biosynthesis; terpenoid biosynthesis. In terms of biological role, cytochrome P450 monooxygenase; part of the gene cluster that mediates the biosynthesis of antifungal fernane-type triterpenoid polytolypin. PolC uses motiol as a substrate and converts the methyl group at position C-4 to a carboxyl group. Within the pathway, the triterpene cyclase polA first catalyzes the cyclization of 2,3-oxidosqualene to motiol, polC converts the 4-alpha-methyl group of motiol to a carboxyl group, polB is responsible for appending a hydroxyl group at the 2-alpha position and polE is a dual functional P450, which can catalyze the formation of both the 1-beta-hydroxyl group and 10-beta-carboxyl group. The polypeptide is Cytochrome P450 monooxygenase polC (Polytolypa hystricis (strain UAMH7299)).